The following is a 228-amino-acid chain: PKHD-type hydroxylase XAC2942 (228 aa).

The 103-residue stretch at 78–180 (RIYPPLFNRY…RVACFFWAQS (103 aa)) folds into the Fe2OG dioxygenase domain. His-96, Asp-98, and His-161 together coordinate Fe cation. Arg-171 lines the 2-oxoglutarate pocket.

It depends on Fe(2+) as a cofactor. L-ascorbate serves as cofactor.

The chain is PKHD-type hydroxylase XAC2942 from Xanthomonas axonopodis pv. citri (strain 306).